We begin with the raw amino-acid sequence, 1368 residues long: DNA-directed RNA polymerase subunit beta (1368 aa).

Belongs to the RNA polymerase beta chain family. The RNAP catalytic core consists of 2 alpha, 1 beta, 1 beta' and 1 omega subunit. When a sigma factor is associated with the core the holoenzyme is formed, which can initiate transcription.

The catalysed reaction is RNA(n) + a ribonucleoside 5'-triphosphate = RNA(n+1) + diphosphate. In terms of biological role, DNA-dependent RNA polymerase catalyzes the transcription of DNA into RNA using the four ribonucleoside triphosphates as substrates. The protein is DNA-directed RNA polymerase subunit beta of Cupriavidus pinatubonensis (strain JMP 134 / LMG 1197) (Cupriavidus necator (strain JMP 134)).